A 580-amino-acid chain; its full sequence is CTP synthase (580 aa).

One can recognise a Glutamine amidotransferase type-1 domain in the interval 304–559 (NIILVGKYVS…VAASSGCLDE (256 aa)). Residues C403, H532, and E534 each act as for GATase activity in the active site.

It belongs to the CTP synthase family.

It carries out the reaction UTP + L-glutamine + ATP + H2O = CTP + L-glutamate + ADP + phosphate + 2 H(+). The protein operates within pyrimidine metabolism; CTP biosynthesis via de novo pathway; CTP from UDP: step 2/2. Functionally, catalyzes the ATP-dependent amination of UTP to CTP with either L-glutamine or ammonia as the source of nitrogen. The sequence is that of CTP synthase (URA7) from Gibberella zeae (strain ATCC MYA-4620 / CBS 123657 / FGSC 9075 / NRRL 31084 / PH-1) (Wheat head blight fungus).